We begin with the raw amino-acid sequence, 301 residues long: Probable 5-dehydro-4-deoxyglucarate dehydratase (301 aa).

Belongs to the DapA family.

It catalyses the reaction 5-dehydro-4-deoxy-D-glucarate + H(+) = 2,5-dioxopentanoate + CO2 + H2O. Its pathway is carbohydrate acid metabolism; D-glucarate degradation; 2,5-dioxopentanoate from D-glucarate: step 2/2. The polypeptide is Probable 5-dehydro-4-deoxyglucarate dehydratase (Allorhizobium ampelinum (strain ATCC BAA-846 / DSM 112012 / S4) (Agrobacterium vitis (strain S4))).